Reading from the N-terminus, the 515-residue chain is Phenylalanine--tRNA ligase beta subunit (515 aa).

One can recognise a B5 domain in the interval 263 to 334 (HEYVKIYVDE…IVMGYNQMPR (72 aa)). Mg(2+)-binding residues include Asn-312, Asp-318, Glu-321, and Asp-322.

Belongs to the phenylalanyl-tRNA synthetase beta subunit family. Type 2 subfamily. As to quaternary structure, tetramer of two alpha and two beta subunits. Mg(2+) is required as a cofactor.

It is found in the cytoplasm. The enzyme catalyses tRNA(Phe) + L-phenylalanine + ATP = L-phenylalanyl-tRNA(Phe) + AMP + diphosphate + H(+). This chain is Phenylalanine--tRNA ligase beta subunit, found in Pyrobaculum aerophilum (strain ATCC 51768 / DSM 7523 / JCM 9630 / CIP 104966 / NBRC 100827 / IM2).